Reading from the N-terminus, the 97-residue chain is Co-chaperonin GroES (97 aa).

This sequence belongs to the GroES chaperonin family. In terms of assembly, heptamer of 7 subunits arranged in a ring. Interacts with the chaperonin GroEL.

Its subcellular location is the cytoplasm. Its function is as follows. Together with the chaperonin GroEL, plays an essential role in assisting protein folding. The GroEL-GroES system forms a nano-cage that allows encapsulation of the non-native substrate proteins and provides a physical environment optimized to promote and accelerate protein folding. GroES binds to the apical surface of the GroEL ring, thereby capping the opening of the GroEL channel. This Yersinia enterocolitica serotype O:8 / biotype 1B (strain NCTC 13174 / 8081) protein is Co-chaperonin GroES.